The sequence spans 891 residues: DNA mismatch repair protein MutS (891 aa).

634 to 641 is an ATP binding site; sequence GPNMGGKS.

Belongs to the DNA mismatch repair MutS family.

Its function is as follows. This protein is involved in the repair of mismatches in DNA. It is possible that it carries out the mismatch recognition step. This protein has a weak ATPase activity. This Burkholderia pseudomallei (strain 668) protein is DNA mismatch repair protein MutS.